We begin with the raw amino-acid sequence, 651 residues long: BTB/POZ domain-containing protein At3g44820 (651 aa).

The BTB domain occupies 25–96; it reads SDITVVVDDV…CYGARVDITS (72 aa). An NPH3 domain is found at 211-509; the sequence is DWWYEDISYL…LQVLFFEQMH (299 aa). Residues 611–651 are disordered; that stretch reads DAKNDTVQNSVSSTPRSATADHTLPRSSRHSKHRKSFSFFG. Positions 615 to 627 are enriched in polar residues; the sequence is DTVQNSVSSTPRS. Residues 637 to 651 show a composition bias toward basic residues; it reads SSRHSKHRKSFSFFG.

Belongs to the NPH3 family.

The protein operates within protein modification; protein ubiquitination. May act as a substrate-specific adapter of an E3 ubiquitin-protein ligase complex (CUL3-RBX1-BTB) which mediates the ubiquitination and subsequent proteasomal degradation of target proteins. The polypeptide is BTB/POZ domain-containing protein At3g44820 (Arabidopsis thaliana (Mouse-ear cress)).